Consider the following 382-residue polypeptide: Intermediate transcription factor 3 large subunit (382 aa).

The protein belongs to the orthopoxvirus OPG150 family. As to quaternary structure, heterodimerizes with protein A8 to form the virus intermediate transcription factor (VITF)-3.

Functionally, acts with RNA polymerase to initiate transcription from intermediate gene promoters. The sequence is that of Intermediate transcription factor 3 large subunit (OPG150) from Homo sapiens (Human).